The chain runs to 257 residues: UPF0246 protein VCM66_2278 (257 aa).

It belongs to the UPF0246 family.

The sequence is that of UPF0246 protein VCM66_2278 from Vibrio cholerae serotype O1 (strain M66-2).